A 360-amino-acid chain; its full sequence is Phospho-N-acetylmuramoyl-pentapeptide-transferase (360 aa).

The next 10 helical transmembrane spans lie at Arg-24–Ile-44, Gly-69–Trp-89, Trp-92–Phe-112, Met-133–Asn-153, Ile-158–Val-178, Gly-199–Ser-219, Val-239–Tyr-259, Val-263–Ile-283, Phe-288–Val-308, and Gln-337–Leu-357.

Belongs to the glycosyltransferase 4 family. MraY subfamily. The cofactor is Mg(2+).

It is found in the cell inner membrane. The catalysed reaction is UDP-N-acetyl-alpha-D-muramoyl-L-alanyl-gamma-D-glutamyl-meso-2,6-diaminopimeloyl-D-alanyl-D-alanine + di-trans,octa-cis-undecaprenyl phosphate = di-trans,octa-cis-undecaprenyl diphospho-N-acetyl-alpha-D-muramoyl-L-alanyl-D-glutamyl-meso-2,6-diaminopimeloyl-D-alanyl-D-alanine + UMP. The protein operates within cell wall biogenesis; peptidoglycan biosynthesis. In terms of biological role, catalyzes the initial step of the lipid cycle reactions in the biosynthesis of the cell wall peptidoglycan: transfers peptidoglycan precursor phospho-MurNAc-pentapeptide from UDP-MurNAc-pentapeptide onto the lipid carrier undecaprenyl phosphate, yielding undecaprenyl-pyrophosphoryl-MurNAc-pentapeptide, known as lipid I. In Neisseria meningitidis serogroup C / serotype 2a (strain ATCC 700532 / DSM 15464 / FAM18), this protein is Phospho-N-acetylmuramoyl-pentapeptide-transferase.